The following is a 180-amino-acid chain: Protein GrpE (180 aa).

Positions 1 to 21 (MSEEVKEQNLPEVEPVQEAAS) are disordered.

This sequence belongs to the GrpE family. Homodimer.

It is found in the cytoplasm. Functionally, participates actively in the response to hyperosmotic and heat shock by preventing the aggregation of stress-denatured proteins, in association with DnaK and GrpE. It is the nucleotide exchange factor for DnaK and may function as a thermosensor. Unfolded proteins bind initially to DnaJ; upon interaction with the DnaJ-bound protein, DnaK hydrolyzes its bound ATP, resulting in the formation of a stable complex. GrpE releases ADP from DnaK; ATP binding to DnaK triggers the release of the substrate protein, thus completing the reaction cycle. Several rounds of ATP-dependent interactions between DnaJ, DnaK and GrpE are required for fully efficient folding. The sequence is that of Protein GrpE from Campylobacter concisus (strain 13826).